A 419-amino-acid polypeptide reads, in one-letter code: L-rhamnose isomerase (419 aa).

Mn(2+)-binding residues include H262, D294, and D296.

It belongs to the rhamnose isomerase family. As to quaternary structure, homotetramer. The cofactor is Mn(2+).

It localises to the cytoplasm. The catalysed reaction is L-rhamnopyranose = L-rhamnulose. It participates in carbohydrate degradation; L-rhamnose degradation; glycerone phosphate from L-rhamnose: step 1/3. Functionally, catalyzes the interconversion of L-rhamnose and L-rhamnulose. This Klebsiella pneumoniae subsp. pneumoniae (strain ATCC 700721 / MGH 78578) protein is L-rhamnose isomerase.